We begin with the raw amino-acid sequence, 246 residues long: Large ribosomal subunit protein uL3 (246 aa).

N5-methylglutamine is present on glutamine 151.

This sequence belongs to the universal ribosomal protein uL3 family. In terms of assembly, part of the 50S ribosomal subunit. Forms a cluster with proteins L14 and L19. In terms of processing, methylated by PrmB.

Its function is as follows. One of the primary rRNA binding proteins, it binds directly near the 3'-end of the 23S rRNA, where it nucleates assembly of the 50S subunit. The sequence is that of Large ribosomal subunit protein uL3 from Bartonella bacilliformis (strain ATCC 35685 / KC583 / Herrer 020/F12,63).